We begin with the raw amino-acid sequence, 676 residues long: DNA ligase (676 aa).

Residues 1–10 (MTQAHHDDAG) are compositionally biased toward basic and acidic residues. Positions 1 to 23 (MTQAHHDDAGARNALQGGLATDP) are disordered. NAD(+) is bound by residues 52–56 (DAAFD) and 95–96 (SL). Lys148 serves as the catalytic N6-AMP-lysine intermediate. 3 residues coordinate NAD(+): Arg169, Glu203, and Lys330. Zn(2+) is bound by residues Cys420, Cys423, Cys436, and Cys441. One can recognise a BRCT domain in the interval 593–676 (EAEGPLAGLT…DKLIAERRGG (84 aa)).

The protein belongs to the NAD-dependent DNA ligase family. LigA subfamily. Mg(2+) is required as a cofactor. Mn(2+) serves as cofactor.

The catalysed reaction is NAD(+) + (deoxyribonucleotide)n-3'-hydroxyl + 5'-phospho-(deoxyribonucleotide)m = (deoxyribonucleotide)n+m + AMP + beta-nicotinamide D-nucleotide.. In terms of biological role, DNA ligase that catalyzes the formation of phosphodiester linkages between 5'-phosphoryl and 3'-hydroxyl groups in double-stranded DNA using NAD as a coenzyme and as the energy source for the reaction. It is essential for DNA replication and repair of damaged DNA. The protein is DNA ligase of Sorangium cellulosum (strain So ce56) (Polyangium cellulosum (strain So ce56)).